The chain runs to 351 residues: Tropomodulin-2 (351 aa).

Ser-25 is modified (phosphoserine).

Belongs to the tropomodulin family. Binds to the N-terminus of tropomyosin and to actin. In terms of tissue distribution, neuronal-tissue specific.

Its subcellular location is the cytoplasm. The protein localises to the cytoskeleton. Its function is as follows. Blocks the elongation and depolymerization of the actin filaments at the pointed end. The Tmod/TM complex contributes to the formation of the short actin protofilament, which in turn defines the geometry of the membrane skeleton. The sequence is that of Tropomodulin-2 (TMOD2) from Homo sapiens (Human).